Here is a 37-residue protein sequence, read N- to C-terminus: Large ribosomal subunit protein bL36 (37 aa).

It belongs to the bacterial ribosomal protein bL36 family.

The sequence is that of Large ribosomal subunit protein bL36 from Dictyoglomus thermophilum (strain ATCC 35947 / DSM 3960 / H-6-12).